A 639-amino-acid polypeptide reads, in one-letter code: tRNA-dihydrouridine(47) synthase [NAD(P)(+)]-like (639 aa).

Polar residues-rich tracts occupy residues 1–19 and 54–65; these read MAESDGSNNENGNLDTVTQ and QTCSELSGNDAE. 2 disordered regions span residues 1–20 and 52–122; these read MAESDGSNNENGNLDTVTQK and DKQT…HSQF. Residues 66 to 85 show a composition bias toward basic and acidic residues; the sequence is NTVRAEDAAEPEAKRIKLDD. Over residues 103–119 the composition is skewed to basic residues; sequence EKKRARGQNKSRPHMKH. C3H1-type zinc fingers lie at residues 122–152 and 160–190; these read FEENKLCPSVTQECASKCFFGDKCKFLHDVA and EDIRPNCYLYETFGKCIYGVTCRFAKSHLGD. FMN contacts are provided by residues 300–302 and Gln-354; that span reads PLT. Cys-385 functions as the Proton donor in the catalytic mechanism. FMN contacts are provided by residues Lys-424, His-454, 486-488, and 509-510; these read NGD and AR.

This sequence belongs to the Dus family. Dus3 subfamily. FMN serves as cofactor.

It carries out the reaction 5,6-dihydrouridine(47) in tRNA + NAD(+) = uridine(47) in tRNA + NADH + H(+). It catalyses the reaction 5,6-dihydrouridine(47) in tRNA + NADP(+) = uridine(47) in tRNA + NADPH + H(+). The catalysed reaction is a 5,6-dihydrouridine in mRNA + NAD(+) = a uridine in mRNA + NADH + H(+). The enzyme catalyses a 5,6-dihydrouridine in mRNA + NADP(+) = a uridine in mRNA + NADPH + H(+). Functionally, catalyzes the synthesis of dihydrouridine, a modified base, in various RNAs, such as tRNAs, mRNAs and some long non-coding RNAs (lncRNAs). Mainly modifies the uridine in position 47 (U47) in the D-loop of most cytoplasmic tRNAs. Also able to mediate the formation of dihydrouridine in some mRNAs, thereby regulating their translation. This chain is tRNA-dihydrouridine(47) synthase [NAD(P)(+)]-like (dus3l), found in Xenopus tropicalis (Western clawed frog).